The following is a 276-amino-acid chain: MDPCSVGVQLRTTHDCHKTFYTRHTGFKTLKELSSNDMLLLQLRTGMTLSGNNTICLHHVKIYIDRFEDLQKSCCDPFNIHKKLAKKNLHVIDLDDATFLSAKFGRQLVPGWKLCPKCTQIINGSVDVDSDDRQRRKPDSDGRTAKALRSLQFTNPGKQTEFAPEGGKREKRKLTKATSAASDRQIIPAKSKVYDSQGLLIFSGMDLCDCLDEDCLGCFYACPTCGSTKCGAECRCDRKWLYEQIEIEGGEIIHNKHAGKAYGLLSPCHPYDILQK.

Residues 158 to 177 (KQTEFAPEGGKREKRKLTKA) form a disordered region. Lys-176 participates in a covalent cross-link: Glycyl lysine isopeptide (Lys-Gly) (interchain with G-Cter in SUMO2). Residues Ser-182 and Ser-266 each carry the phosphoserine modification.

As to quaternary structure, interacts with ARL14 and MYO1E.

Its subcellular location is the cytoplasm. Functionally, through its interaction with ARL14 and MYO1E, may connect MHC class II-containing cytoplasmic vesicles to the actin network and hence controls the movement of these vesicles along the actin cytoskeleton in dendritic cells. The polypeptide is ARL14 effector protein (Arl14ep) (Mus musculus (Mouse)).